The chain runs to 574 residues: DNA polymerase alpha subunit B (574 aa).

Belongs to the DNA polymerase alpha subunit B family. Component of the alpha DNA polymerase complex (also known as the alpha DNA polymerase-primase complex) consisting of four subunits: the catalytic subunit pol1, the accessory subunit spb70/pol12, and the primase complex subunits spp1/pri1 and spp2/pri2 respectively. Interacts with orc1. Interacts with orc2; the interaction occurs on the chromatin, is stable thoughout the cell cycle and is independent from spb70 role in the alpha DNA polymerase complex. Post-translationally, phosphorylated in a cell cycle-dependent manner.

It is found in the nucleus. Its subcellular location is the chromosome. In terms of biological role, accessory subunit of the DNA polymerase alpha complex (also known as the alpha DNA polymerase-primase complex) which plays an essential role in the initiation of DNA synthesis. During the S phase of the cell cycle, the DNA polymerase alpha complex (composed of a catalytic subunit pol1, an accessory subunit spb70/pol12 and two primase subunits, the catalytic subunit spp1/pri1 and the regulatory subunit spp2/pri2) is recruited to DNA at the replicative forks. The primase subunit of the polymerase alpha complex initiates DNA synthesis by oligomerising short RNA primers on both leading and lagging strands. In Schizosaccharomyces pombe (strain 972 / ATCC 24843) (Fission yeast), this protein is DNA polymerase alpha subunit B.